A 146-amino-acid polypeptide reads, in one-letter code: uncharacterized protein (146 aa).

The region spanning 31–119 is the Toprim domain; it reads EKVMIVEGKS…RAYKEVAAAP (89 aa).

This is an uncharacterized protein from Bacillus subtilis (strain 168).